Here is a 61-residue protein sequence, read N- to C-terminus: Small ribosomal subunit protein uS14 (61 aa).

Residues Cys-24, Cys-27, Cys-40, and Cys-43 each coordinate Zn(2+).

This sequence belongs to the universal ribosomal protein uS14 family. Zinc-binding uS14 subfamily. In terms of assembly, part of the 30S ribosomal subunit. Contacts proteins S3 and S10. It depends on Zn(2+) as a cofactor.

Functionally, binds 16S rRNA, required for the assembly of 30S particles and may also be responsible for determining the conformation of the 16S rRNA at the A site. This Ruminiclostridium cellulolyticum (strain ATCC 35319 / DSM 5812 / JCM 6584 / H10) (Clostridium cellulolyticum) protein is Small ribosomal subunit protein uS14.